We begin with the raw amino-acid sequence, 431 residues long: Adenylosuccinate synthetase (431 aa).

Residues 12-18 and 40-42 contribute to the GTP site; these read GDEGKGK and GHT. Asp13 functions as the Proton acceptor in the catalytic mechanism. The Mg(2+) site is built by Asp13 and Gly40. IMP-binding positions include 13–16, 38–41, Thr131, Arg145, Gln225, Thr240, and Arg304; these read DEGK and NAGH. The active-site Proton donor is His41. 300–306 lines the substrate pocket; sequence TNTGRRR. GTP-binding positions include Arg306, 332–334, and 414–416; these read KLD and STS.

The protein belongs to the adenylosuccinate synthetase family. In terms of assembly, homodimer. Requires Mg(2+) as cofactor.

Its subcellular location is the cytoplasm. The catalysed reaction is IMP + L-aspartate + GTP = N(6)-(1,2-dicarboxyethyl)-AMP + GDP + phosphate + 2 H(+). It functions in the pathway purine metabolism; AMP biosynthesis via de novo pathway; AMP from IMP: step 1/2. Plays an important role in the de novo pathway of purine nucleotide biosynthesis. Catalyzes the first committed step in the biosynthesis of AMP from IMP. This is Adenylosuccinate synthetase from Methylocella silvestris (strain DSM 15510 / CIP 108128 / LMG 27833 / NCIMB 13906 / BL2).